We begin with the raw amino-acid sequence, 204 residues long: Tumor protein D53 (204 aa).

Positions 1 to 31 (MEAQAQGLLETEPLQGRDGDAVGSADFSSML) are disordered. A coiled-coil region spans residues 22–73 (VGSADFSSMLSEEEKEELKAELIQLEDEITTLRQVLSAKERHLVEIKQKLGM). Phosphoserine is present on residues serine 29, serine 86, serine 122, and serine 131. Position 133 is an omega-N-methylarginine (arginine 133). Position 146 is a phosphothreonine (threonine 146). Phosphoserine is present on residues serine 149 and serine 174. Positions 164–204 (KVGGTNHGGGSFEEVLNSTAHASSQNASAGSRQTKDEELQC) are disordered. A compositionally biased stretch (polar residues) spans 179-195 (LNSTAHASSQNASAGSR).

This sequence belongs to the TPD52 family. In terms of assembly, forms a homodimer or heterodimer with other members of the family.

This is Tumor protein D53 (Tpd52l1) from Mus musculus (Mouse).